The primary structure comprises 204 residues: MTKYTFKPKDFKAFNVEGLDARMEALNEYIRPQLHELGEYFSDFFTSQTGETFYPHVAKHARRSVNPPKDTWVAFATSKRGYKMLPHFQIGMFEDQLFVMFGIMHEAKDKATRAKVFERKFKAIQQLPDDYRVCLDHMKPDKPFIKDLTDDDLKEAIQRAINVKKGEFFIARAITPQDKRLKSDKAFIAFLEETFDQFLPFYSA.

This sequence belongs to the UPF0637 family.

This is UPF0637 protein SaurJH9_1166 from Staphylococcus aureus (strain JH9).